Here is a 295-residue protein sequence, read N- to C-terminus: Large ribosomal subunit protein uL29m (295 aa).

This sequence belongs to the universal ribosomal protein uL29 family. Component of the mitochondrial large ribosomal subunit. Mature mitochondrial ribosomes consist of a small (37S) and a large (54S) subunit. The 37S subunit contains at least 33 different proteins and 1 molecule of RNA (15S). The 54S subunit contains at least 45 different proteins and 1 molecule of RNA (21S).

Its subcellular location is the mitochondrion. This Meyerozyma guilliermondii (strain ATCC 6260 / CBS 566 / DSM 6381 / JCM 1539 / NBRC 10279 / NRRL Y-324) (Yeast) protein is Large ribosomal subunit protein uL29m (MRPL4).